The chain runs to 129 residues: Small ribosomal subunit protein uS11 (129 aa).

The protein belongs to the universal ribosomal protein uS11 family. In terms of assembly, part of the 30S ribosomal subunit. Interacts with proteins S7 and S18. Binds to IF-3.

Located on the platform of the 30S subunit, it bridges several disparate RNA helices of the 16S rRNA. Forms part of the Shine-Dalgarno cleft in the 70S ribosome. The sequence is that of Small ribosomal subunit protein uS11 from Sodalis glossinidius (strain morsitans).